The chain runs to 349 residues: Ethyl acetate hydrolase (349 aa).

One can recognise an AB hydrolase-1 domain in the interval 67–300; the sequence is YIGEGRALDP…SHDQFFTVDD (234 aa). The active-site Nucleophile is the Ser139. Catalysis depends on residues Asp293 and His322.

It belongs to the AB hydrolase superfamily. Acetyl esterase family. In terms of assembly, homodimer.

The catalysed reaction is ethyl acetate + H2O = ethanol + acetate + H(+). In terms of biological role, esterase that catalyzes the hydrolysis of ethyl acetate. Involved in the degradation of short chain methyl ketones (MEK) such as 2-butanone and 2-hexanone. In vitro, can also hydrolyze vinyl acetate, 4-nitrophenyl acetate, methyl acetate, propyl acetate, benzyl acetate and methyl propionate. The highest activities are obtained with acetic acid esters, but the alcohol group also plays an important role, as compounds with two carbon atoms in the alcohol moiety, i.e., vinyl and ethyl acetate, are by far the preferred substrates. The sequence is that of Ethyl acetate hydrolase from Pseudomonas veronii.